Here is a 143-residue protein sequence, read N- to C-terminus: Large ribosomal subunit protein uL11 (143 aa).

Belongs to the universal ribosomal protein uL11 family. As to quaternary structure, part of the ribosomal stalk of the 50S ribosomal subunit. Interacts with L10 and the large rRNA to form the base of the stalk. L10 forms an elongated spine to which 2 L12 dimers bind in a sequential fashion forming a pentameric L10(L12)2(L12)2 complex. In terms of processing, one or more lysine residues are methylated.

In terms of biological role, forms part of the ribosomal stalk which helps the ribosome interact with GTP-bound translation factors. The polypeptide is Large ribosomal subunit protein uL11 (Agrobacterium fabrum (strain C58 / ATCC 33970) (Agrobacterium tumefaciens (strain C58))).